A 194-amino-acid polypeptide reads, in one-letter code: Factor in the germline alpha (194 aa).

A bHLH domain is found at 59–111 (ERRRVANAKERERIKNLNRGFAKLKALVPFLPQSRKPSKVDILKGATEYIQIL). The segment covering 121–137 (SEKQSPEEQTHSGRPSD) has biased composition (basic and acidic residues). The segment at 121–163 (SEKQSPEEQTHSGRPSDPHVSSTRELLGNATQPTSCASGLKKE) is disordered. A compositionally biased stretch (polar residues) spans 139–157 (HVSSTRELLGNATQPTSCA).

Heterodimer with TCF3/isoform E12. As to expression, expressed only in the oocytes within the ovary and at lower level in the testis. Found in the resting oocytes of the primordial follicle cells, at the periphery of the ovary and in the hilar region. Also detected in growing oocytes, but at lower levels.

The protein localises to the nucleus. Functionally, germ-line specific transcription factor implicated in postnatal oocyte-specific gene expression. Plays a key regulatory role in the expression of multiple oocyte-specific genes, including those that initiate folliculogenesis and those that encode the zona pellucida (ZP1, ZP2 and ZP3) required for fertilization and early embryonic survival. Essential for oocytes to survive and form primordial follicles. The persistence of FIGLA in adult females suggests that it may regulate additional pathways that are essential for normal ovarian development. Binds to the E-box (5'-CANNTG-3') of the ZPs (ZP1, ZP2, ZP3) promoters. This Mus musculus (Mouse) protein is Factor in the germline alpha (Figla).